Reading from the N-terminus, the 399-residue chain is Glycerate 2-kinase (399 aa).

Substrate is bound at residue Lys48.

It belongs to the glycerate kinase type-1 family. Homodimer. Requires Mg(2+) as cofactor. Ni(2+) is required as a cofactor. It depends on Mn(2+) as a cofactor. The cofactor is Co(2+). Ca(2+) serves as cofactor. Requires Zn(2+) as cofactor. Sr(2+) is required as a cofactor.

The enzyme catalyses (R)-glycerate + ATP = (2R)-2-phosphoglycerate + ADP + H(+). In terms of biological role, catalyzes the ATP-dependent phosphorylation of D-glycerate to 2-phosphoglycerate. It can also utilize GTP, CTP, UTP, ADP, AMP or pyrophosphate as phosphate donor. The sequence is that of Glycerate 2-kinase (gck) from Sulfurisphaera tokodaii (strain DSM 16993 / JCM 10545 / NBRC 100140 / 7) (Sulfolobus tokodaii).